Reading from the N-terminus, the 349-residue chain is Ion-translocating oxidoreductase complex subunit D (349 aa).

3 helical membrane passes run valine 20–glycine 42, serine 77–valine 99, and alanine 124–alanine 144. Threonine 185 is subject to FMN phosphoryl threonine. 5 helical membrane-spanning segments follow: residues serine 212 to leucine 232, tryptophan 239 to leucine 259, alanine 265 to threonine 285, alanine 291 to isoleucine 311, and glycine 315 to isoleucine 335.

Belongs to the NqrB/RnfD family. In terms of assembly, the complex is composed of six subunits: RnfA, RnfB, RnfC, RnfD, RnfE and RnfG. The cofactor is FMN.

Its subcellular location is the cell inner membrane. Its function is as follows. Part of a membrane-bound complex that couples electron transfer with translocation of ions across the membrane. The polypeptide is Ion-translocating oxidoreductase complex subunit D (Shewanella baltica (strain OS185)).